The primary structure comprises 192 residues: uncharacterized protein (192 aa).

Residues 1 to 17 (MFLHLILLAGLAPVVYL) form the signal peptide.

This is an uncharacterized protein from Caenorhabditis elegans.